A 289-amino-acid chain; its full sequence is Xyloglucan endotransglucosylase/hydrolase protein 15 (289 aa).

Positions 1-25 (MGPSSSLTTIVATVLLVTLFGSAYA) are cleaved as a signal peptide. Positions 26–216 (SNFFDEFDLT…WSKAPFTAYY (191 aa)) constitute a GH16 domain. Glu-102 functions as the Nucleophile in the catalytic mechanism. Glu-106 acts as the Proton donor in catalysis. Residue Glu-106 coordinates xyloglucan. N-linked (GlcNAc...) asparagine glycosylation occurs at Asn-110. Xyloglucan-binding positions include 119–121 (HTN), 129–131 (DRE), 195–196 (DW), and Gly-200. 2 disulfides stabilise this stretch: Cys-224/Cys-230 and Cys-270/Cys-284. Residue Arg-275 participates in xyloglucan binding.

The protein belongs to the glycosyl hydrolase 16 family. XTH group 2 subfamily. Contains at least one intrachain disulfide bond essential for its enzymatic activity. As to expression, strongly expressed in roots, hypocotyls and cotyledons. Aslo detected in inflorescence stems and in the carpels and styles in flowers.

It is found in the secreted. It localises to the cell wall. The protein localises to the extracellular space. Its subcellular location is the apoplast. The enzyme catalyses breaks a beta-(1-&gt;4) bond in the backbone of a xyloglucan and transfers the xyloglucanyl segment on to O-4 of the non-reducing terminal glucose residue of an acceptor, which can be a xyloglucan or an oligosaccharide of xyloglucan.. It catalyses the reaction xyloglucan + H2O = xyloglucan oligosaccharides.. Catalyzes xyloglucan endohydrolysis (XEH) and/or endotransglycosylation (XET). Cleaves and religates xyloglucan polymers, an essential constituent of the primary cell wall, and thereby participates in cell wall construction of growing tissues. Has a high XET activity, but little or no XEH activity in vitro. Acceptor preferences are XXXGol &gt; XLLGol = XLFGol &gt; XXLGol &gt; XXFGol. The protein is Xyloglucan endotransglucosylase/hydrolase protein 15 of Arabidopsis thaliana (Mouse-ear cress).